The primary structure comprises 117 residues: Immunoglobulin heavy variable 3-7 (117 aa).

An N-terminal signal peptide occupies residues 1-19 (MELGLSWVFLVAILEGVQC). Positions 20-44 (EVQLVESGGGLVQPGGSLRLSCAAS) are framework-1. The 98-residue stretch at 20–117 (EVQLVESGGG…EDTAVYYCAR (98 aa)) folds into the Ig-like domain. Cysteines 41 and 115 form a disulfide. Residues 45-52 (GFTFSSYW) form a complementarity-determining-1 region. Positions 53-69 (MSWVRQAPGKGLEWVAN) are framework-2. A complementarity-determining-2 region spans residues 70-77 (IKQDGSEK). A framework-3 region spans residues 78 to 115 (YYVDSVKGRFTISRDNAKNSLYLQMNSLRAEDTAVYYC). Residues 116-117 (AR) form a complementarity-determining-3 region.

As to quaternary structure, immunoglobulins are composed of two identical heavy chains and two identical light chains; disulfide-linked.

The protein localises to the secreted. The protein resides in the cell membrane. Its function is as follows. V region of the variable domain of immunoglobulin heavy chains that participates in the antigen recognition. Immunoglobulins, also known as antibodies, are membrane-bound or secreted glycoproteins produced by B lymphocytes. In the recognition phase of humoral immunity, the membrane-bound immunoglobulins serve as receptors which, upon binding of a specific antigen, trigger the clonal expansion and differentiation of B lymphocytes into immunoglobulins-secreting plasma cells. Secreted immunoglobulins mediate the effector phase of humoral immunity, which results in the elimination of bound antigens. The antigen binding site is formed by the variable domain of one heavy chain, together with that of its associated light chain. Thus, each immunoglobulin has two antigen binding sites with remarkable affinity for a particular antigen. The variable domains are assembled by a process called V-(D)-J rearrangement and can then be subjected to somatic hypermutations which, after exposure to antigen and selection, allow affinity maturation for a particular antigen. This is Immunoglobulin heavy variable 3-7 from Homo sapiens (Human).